The sequence spans 2130 residues: MKAGVLSGTSACHTFDTSADGYGRADGIGALYVKRLEDALRDGDPIRSLIRGSAVNANGKTSGISLPSADGQEAVIQKAMAKGGIVPDDITFVECHGTGTKVGDAIEVEALSRVFQRTPNNPLMIGSVKSNVGHSEAASGISSVIKSTLALERGQIPPTHGLKNINPKLKVEDRNIKIPTELTNWPNHSSRVRRVGINSFGYGGANCHVILEQPTKTLSSSRQLRQLPITQSTVILPLSAASTASLEARVADFARYEFGDTDIADLAYTLGSRRTHFAERGFLLAPRSQEISHSFQTRTWVTSASPVTGVASTPFAFVFTGQGSQWPGMCRELLSEFSLFRDTITEMDSVLKSLPGPPSWSLMEAILDVDNPSLIHLPQRSQPCCTAIQVALIRLLSSWEIAPTMTVGHSSGEIAAAFAAGHVSAAEAIVIAYYRGYCVSKSTRVGAMMAIGLSESSTTDEIAKAGLDDQIRVACVNSPEGVTVSGDENALDIFLATLQQRNIFARKLKTGGQAYHSHHMVSIGEEYQALLERALPSLGPSIRQPQGASVMSSVTGELKSSGFTASYWRSNLESQVRFAHAIERIHELTEHCFIELGPHSSLELPIKQTLAKAGAELKYAAPIKRNVDSMESILSFAGNLWLKGYEINWSKVNGLQTGLKSVRSMYRVVTDLPPYRFNYENILWNECRASVEYRQRKYPHHELLGSLLTGGNARDKIFRNILKVDDVSWLKDHKLGDTVVFPGAGYLAMAMEAVMQATDAARTDPTFQFSNVNITNALTLNTEFSTSAEIFTSLHKSVITNAATSATWWDFAISSYHNGSAVQHASGSIAIHPRNAALQSKYKPPSGALESTAKRTWYEKFIRQGLNYGPTFQTISEFYTPRMKSESFASATAPLLKTSGDSISVYPVHPIALDGMIQLAVVAATNGKPKELRAQIPTRLPSAIVHTSTSSNQTCQMHAVVKRIGFGYTHAGIEMIDSDGQIVAQFDDIRLSPYQSTSQADIEDKRHPVLRVLWKPDIYGLGLMAMDDAQHHVQKFADEAHSPVSGPLLKMGAMLDLLAHKNPRLRILEIGNDVQDITLAVLGLLSAQGSFKRLSAYSTASVSDDGTILGGLLNLETGERCSSPTELDHEYDLILLPAMNEHIDRAVDTFGGLMADDASILALCPGLTSNSFASRGLDCLPVRLSEDGTTLIVARKPQELQQVSLQRHKFLIVEREKTALGSALADTLKPIQGQWVMRVRLNELTPAHVSSGTTIFNLCEIKSPLLSVISDDEMARVKVMTDNATLLVWVTNGNIMHGDRPDFALVSGLARALMLEQPSLKLYTYDIDEPETQIHMTAKRLVSLLTQPGKKPDLEFAQRKGVVHVSRFTPDDSINTLFRNKQGLETTESSLHDAKDVRLAIEQAGQLDTIYFQQLKAPQTIGPTDLRIRVASVGLNAKDYYVLVGRVDTPDATCQLECAGTVEQVGSLVTDFAPGDRVVAMAPSHFQTYQTLPQWACHKLTDAESFDISATLPIVYATAIYALHYRAHIQAGETVLIHSGAGGVGIAAIQLALHAGAEVFTTVSSDEKKKFLVDKLGVKASNIFSSRDTSFLEGIFSATSGRGVDVILNSLTGDQLHATWRCCAAFGRFVEIGKMDLTTAGRLEMDQFLQSTTFTAFDLSHLYHTDSEQLHSLWNDLLSQVMKLYRQGTITAFEPLNIFDIGETEQAFRYFSSRSRIGKVAINLERAESTIPIQPLRHTTQFDSEKSYVMVGCLGGLGRTLSRWMVNRGARKFTFLGRSGIDKAAARHLVQDLEASGARCEVVRGDVCEASDVEAVITAAAAMGEIGGVVQAAMGLNEAIFSVMPNEYWHTGIDPKVQGSWNLYNSLQMHGRGSHLDFFLMTSSVSGSVGTATESNYCAANHFLDQFSRFLRNQGYPAVAVGLGMISEVGYLHDNPEIEALLLRKGIQAIDADELLQLIDLALSSSATMGISHAHDELAASHLLTGLEAFGLKELRKRGFEGSHPALDDPRANLLASALDGGSDESSQAQNGSLPAEVTTLMQSGHTLDEAVLDHIRRRFGNLVLLKYEVVDVKKPLLQYGMDSMIGAEFRTWFYQSLTTDVPLVMLLGSSCTLESLRDLAMTSLEVGKS.

In terms of domain architecture, Ketosynthase family 3 (KS3) spans methionine 1–glutamine 213. The Malonyl-CoA:ACP transacylase (MAT) domain maps to phenylalanine 317–glycine 644. Residues histidine 701–alanine 836 are N-terminal hotdog fold. A PKS/mFAS DH domain is found at histidine 701–alanine 1000. The Proton acceptor; for dehydratase activity role is filled by histidine 733. Residues leucine 849–alanine 1000 form a C-terminal hotdog fold region. Aspartate 914 acts as the Proton donor; for dehydratase activity in catalysis. An Enoyl reductase (ER) domain is found at glycine 1405–isoleucine 1722. The Ketoreductase (KR) domain maps to serine 1747–serine 1927. The Carrier domain maps to threonine 2047–leucine 2125. The residue at position 2084 (serine 2084) is an O-(pantetheine 4'-phosphoryl)serine.

Pantetheine 4'-phosphate serves as cofactor.

Its pathway is secondary metabolite biosynthesis. Functionally, highly reducing polyketide synthase; part of the gene cluster that mediates the biosynthesis of annullatin D, an alkylated aromatic polyketide with a fused dihydrobenzofuran lactone ring system that exhibits potent agonistic activities toward the cannabinoid receptors. The annullatin backbone 2-hydroxymethyl-3-pentylphenol is assembled from one acetyl-CoA starter unit and 5 malonyl-CoA elongation units by cooperation of the highly reducing polyketide synthase anuA, the short-chain dehydrogenase anuB and the oxidoreductase anuC, before being hydroxylated at the C-5 alkyl chain by the cytochrome P450 monooxygenase anuE to form (8S)-annullatin E. The prenyltransferase anuH subsequently installs one isoprenyl group at the benzene ring to form (8S)-annullatin J. Enzymatic or nonenzymatic dihydro-benzofuran ring formation between the prenyl and the phenolic hydroxyl groups in (8S)-annullatin J results in two diastereomers (2S,9S)-annullatin H and compound 12. The intermediate (2S,9S)-annullatin H is then converted to (2S,9S)-annullatin D by the FAD-linked oxidoreductase anuG-catalyzed five-member lactone ring formation. The isomer 12 acts as a substrate for the short-chain dehydrogenase anuF and is oxidized to (2R)-annullatin F, which is subsequently acetylated by an acetyltransferase leading to (2R)-annullatin G formation. The remaining enzymes identified within the cluster, anuD, anuI and anuJ, seem not to be involved in annullatin biosynthesis. In Penicillium roqueforti (strain FM164), this protein is Highly reducing polyketide synthase anuA.